We begin with the raw amino-acid sequence, 338 residues long: MPNMKTLGEFIVEKQNDFPHASGDLSSLLGSIKLAAKIVNREINKAGLVDITGAIGSENVQGEEQQKLDLYANDKFKAAMEARDQVCGVASEEEDEAVTFNKDLNRNAKYVILMDPLDGSSNIDVNVSVGTIFSIYRRVSPIGTTPTQDDFLQPGNQQVAAGYVIYGSSTMLVYTTGNGIHGFTYDPSLGVFCLSHENMQIPEDGQIYSINEGNYIRFPQGVKKYIKFCQEDVPADNRPYTSRYIGSLVSDFHRNLLKGGIYMYPSTAMYPNGKLRLLYECNPMAFLMEQAGGVASDGKNRILDITPTELHQRVPFFVGSTNMVKQVESFIEEYPEQH.

4 residues coordinate Mg(2+): Glu92, Asp115, Leu117, and Asp118. Substrate contacts are provided by residues Asp118–Ser121, Asn211, Tyr244, and Lys274. Glu280 serves as a coordination point for Mg(2+).

This sequence belongs to the FBPase class 1 family. Homotetramer. Mg(2+) serves as cofactor.

Its subcellular location is the cytoplasm. It catalyses the reaction beta-D-fructose 1,6-bisphosphate + H2O = beta-D-fructose 6-phosphate + phosphate. The protein operates within carbohydrate biosynthesis; gluconeogenesis. This chain is Fructose-1,6-bisphosphatase class 1, found in Photobacterium profundum (strain SS9).